The primary structure comprises 295 residues: Phosphatidylserine decarboxylase proenzyme (295 aa).

Active-site charge relay system; for autoendoproteolytic cleavage activity residues include D113, H169, and S256. Catalysis depends on S256, which acts as the Schiff-base intermediate with substrate; via pyruvic acid; for decarboxylase activity. Residue S256 is modified to Pyruvic acid (Ser); by autocatalysis.

It belongs to the phosphatidylserine decarboxylase family. PSD-B subfamily. Prokaryotic type II sub-subfamily. Heterodimer of a large membrane-associated beta subunit and a small pyruvoyl-containing alpha subunit. Pyruvate serves as cofactor. Post-translationally, is synthesized initially as an inactive proenzyme. Formation of the active enzyme involves a self-maturation process in which the active site pyruvoyl group is generated from an internal serine residue via an autocatalytic post-translational modification. Two non-identical subunits are generated from the proenzyme in this reaction, and the pyruvate is formed at the N-terminus of the alpha chain, which is derived from the carboxyl end of the proenzyme. The autoendoproteolytic cleavage occurs by a canonical serine protease mechanism, in which the side chain hydroxyl group of the serine supplies its oxygen atom to form the C-terminus of the beta chain, while the remainder of the serine residue undergoes an oxidative deamination to produce ammonia and the pyruvoyl prosthetic group on the alpha chain. During this reaction, the Ser that is part of the protease active site of the proenzyme becomes the pyruvoyl prosthetic group, which constitutes an essential element of the active site of the mature decarboxylase.

The protein localises to the cell membrane. It carries out the reaction a 1,2-diacyl-sn-glycero-3-phospho-L-serine + H(+) = a 1,2-diacyl-sn-glycero-3-phosphoethanolamine + CO2. It participates in phospholipid metabolism; phosphatidylethanolamine biosynthesis; phosphatidylethanolamine from CDP-diacylglycerol: step 2/2. In terms of biological role, catalyzes the formation of phosphatidylethanolamine (PtdEtn) from phosphatidylserine (PtdSer). The sequence is that of Phosphatidylserine decarboxylase proenzyme from Clostridium botulinum (strain Langeland / NCTC 10281 / Type F).